A 206-amino-acid polypeptide reads, in one-letter code: Small ribosomal subunit protein uS4 (206 aa).

A disordered region spans residues 23–47 (AKSPLNRREYGPGQHGQRRKGKLSD). The region spanning 94-157 (RRLDAVIYRA…RQLAIVLESV (64 aa)) is the S4 RNA-binding domain.

The protein belongs to the universal ribosomal protein uS4 family. In terms of assembly, part of the 30S ribosomal subunit. Contacts protein S5. The interaction surface between S4 and S5 is involved in control of translational fidelity.

One of the primary rRNA binding proteins, it binds directly to 16S rRNA where it nucleates assembly of the body of the 30S subunit. Its function is as follows. With S5 and S12 plays an important role in translational accuracy. This chain is Small ribosomal subunit protein uS4, found in Paracoccus denitrificans (strain Pd 1222).